The chain runs to 179 residues: Large ribosomal subunit protein uL5 (179 aa).

It belongs to the universal ribosomal protein uL5 family. As to quaternary structure, part of the 50S ribosomal subunit; part of the 5S rRNA/L5/L18/L25 subcomplex. Contacts the 5S rRNA and the P site tRNA. Forms a bridge to the 30S subunit in the 70S ribosome.

In terms of biological role, this is one of the proteins that bind and probably mediate the attachment of the 5S RNA into the large ribosomal subunit, where it forms part of the central protuberance. In the 70S ribosome it contacts protein S13 of the 30S subunit (bridge B1b), connecting the 2 subunits; this bridge is implicated in subunit movement. Contacts the P site tRNA; the 5S rRNA and some of its associated proteins might help stabilize positioning of ribosome-bound tRNAs. This chain is Large ribosomal subunit protein uL5, found in Bacillus cereus (strain G9842).